We begin with the raw amino-acid sequence, 148 residues long: Large ribosomal subunit protein uL15 (148 aa).

The tract at residues 12 to 52 (ERKNRKRVGRGGGSGWGGTSGKGHKGQNARSGGGVPAWFEG) is disordered. Gly residues predominate over residues 21–32 (RGGGSGWGGTSG).

Belongs to the universal ribosomal protein uL15 family. As to quaternary structure, part of the 50S ribosomal subunit.

In terms of biological role, binds to the 23S rRNA. This is Large ribosomal subunit protein uL15 from Maridesulfovibrio salexigens (strain ATCC 14822 / DSM 2638 / NCIMB 8403 / VKM B-1763) (Desulfovibrio salexigens).